Reading from the N-terminus, the 1187-residue chain is Roquin-2 (1187 aa).

Residues cysteine 14, cysteine 17, cysteine 33, histidine 35, cysteine 38, cysteine 50, and aspartate 53 each contribute to the Zn(2+) site. Residues 14–54 (CPICYNEFDENVHKPISLGCSHTVCKTCLNKLHRKACPFDQ) form an RING-type; degenerate zinc finger. The tract at residues 91–170 (ENKHYEVAKK…RTVTELILQH (80 aa)) is HEPN-N. Residues 171–325 (QNPQQLSANL…SIIDKLQSPE (155 aa)) form an ROQ region. Residues 326 to 396 (SFAKSVQELT…GLVDFIQNYS (71 aa)) form an HEPN-C region. The C3H1-type zinc-finger motif lies at 410-438 (KYKTSMCRDLRQQGGCPRGTNCTFAHSQE). 2 disordered regions span residues 527–571 (VGTN…GTEL) and 640–677 (NVPE…PPPQ). A compositionally biased stretch (polar residues) spans 529–545 (TNAQNAGPSAESVSENK). Serine 548 is modified (phosphoserine). Residues 553–571 (PVSNAAATSAGPSNFGTEL) show a composition bias toward polar residues. 3 positions are modified to phosphoserine: serine 806, serine 981, and serine 1115.

Interacts with EDC4. Interacts with CCR4-NOT deadenylase complex. Interacts with MAP3K5; the interaction is probably stimulus-dependent. Post-translationally, proteolytically cleaved by MALT1 in activated CD4(+) T cells; cleavage at Arg-509 is critical for promoting RC3H1 degradation in response to T-cell receptor (TCR) stimulation, and hence is necessary for prolonging the stability of a set of mRNAs controlling Th17 cell differentiation. As to expression, highest levels in lymph node and thymus and slightly lesser amounts in brain, lung, and spleen (at protein level). Very weak expression in heart, muscle, and kidney (at protein level). Expressed in CD4(+) helper T-cells (at protein level).

Its subcellular location is the cytoplasm. It localises to the P-body. It catalyses the reaction S-ubiquitinyl-[E2 ubiquitin-conjugating enzyme]-L-cysteine + [acceptor protein]-L-lysine = [E2 ubiquitin-conjugating enzyme]-L-cysteine + N(6)-ubiquitinyl-[acceptor protein]-L-lysine.. It participates in protein modification; protein ubiquitination. Its activity is regulated as follows. Binding to dsRNA, but not CDE RNA, crosstalks with the E3 ubiquitin ligase activity and may inhibit ubiquitination. Functionally, post-transcriptional repressor of mRNAs containing a conserved stem loop motif, called constitutive decay element (CDE), which is often located in the 3'-UTR, as in HMGXB3, ICOS, IER3, NFKBID, NFKBIZ, PPP1R10, TNF and in many more mRNAs. Binds to CDE and promotes mRNA deadenylation and degradation. This process does not involve miRNAs. In follicular helper T (Tfh) cells, represses of ICOS and TNFRSF4 expression, thus preventing spontaneous Tfh cell differentiation, germinal center B-cell differentiation in the absence of immunization and autoimmunity. In resting or LPS-stimulated macrophages, controls inflammation by suppressing TNF expression. Also recognizes CDE in its own mRNA and in that of paralogous RC3H1, possibly leading to feedback loop regulation. Inhibits cooperatively with ZC3H12A the differentiation of helper T cells Th17 in lungs. They repress target mRNA encoding the Th17 cell-promoting factors IL6, ICOS, REL, IRF4, NFKBID and NFKBIZ. The cooperation requires RNA-binding by RC3H1 and the nuclease activity of ZC3H12A. miRNA-binding protein that regulates microRNA homeostasis. Enhances DICER-mediated processing of pre-MIR146a but reduces mature MIR146a levels through an increase of 3' end uridylation. Both inhibits ICOS mRNA expression and they may act together to exert the suppression. Acts as a ubiquitin E3 ligase. Pairs with E2 enzymes UBE2B, UBE2D2, UBE2E2, UBE2E3, UBE2G2, UBE2K and UBE2Q2 and produces polyubiquitin chains. Shows the strongest activity when paired with UBE2N:UBE2V1 or UBE2N:UBE2V2 E2 complexes and generate both short and long polyubiquitin chains. Involved in the ubiquitination of MAP3K5. Able to interact with double-stranded RNA (dsRNA). The polypeptide is Roquin-2 (Rc3h2) (Mus musculus (Mouse)).